The primary structure comprises 120 residues: MSRILMSQLTHPQRVRLLYKTILRLHRGLPAELRALGDNYVRDEFRRHLKCNPMEAQLFMTEWARYASTITQQLGIRGKPKGELGEEIDPKTVEMLKDDQVVQLYELMLAAKGVEDAQGK.

A mitochondrion-targeting transit peptide spans 1 to 36 (MSRILMSQLTHPQRVRLLYKTILRLHRGLPAELRAL).

Belongs to the complex I LYR family. SDHAF3 subfamily. In terms of assembly, interacts with SdhB within an SdhA-SdhB subcomplex.

It is found in the mitochondrion matrix. In terms of biological role, plays an essential role in the assembly of succinate dehydrogenase (SDH), an enzyme complex (also referred to as respiratory complex II) that is a component of both the tricarboxylic acid (TCA) cycle and the mitochondrial electron transport chain, and which couples the oxidation of succinate to fumarate with the reduction of ubiquinone (coenzyme Q) to ubiquinol. Promotes maturation of the iron-sulfur protein subunit SdhB of the SDH catalytic dimer, protecting it from the deleterious effects of oxidants. This Drosophila melanogaster (Fruit fly) protein is Succinate dehydrogenase assembly factor 3, mitochondrial.